A 435-amino-acid chain; its full sequence is Antho-RFamide neuropeptides type 1 (435 aa).

The N-terminal stretch at 1–22 (MTTVSYVTILLTVLVQVLTSDA) is a signal peptide. A propeptide spanning residues 23 to 193 (KATNNKRELS…SVPGRYGREL (171 aa)) is cleaved from the precursor. Glutamine 194 carries the post-translational modification Pyrrolidone carboxylic acid. The residue at position 197 (phenylalanine 197) is a Phenylalanine amide. The propeptide occupies 199–201 (REL). Phenylalanine amide is present on phenylalanine 205. A propeptide spanning residues 207 to 209 (REA) is cleaved from the precursor. Residue phenylalanine 213 is modified to Phenylalanine amide. The propeptide occupies 215–217 (REL). Phenylalanine 221 is subject to Phenylalanine amide. A propeptide spanning residues 223 to 225 (REF) is cleaved from the precursor. Phenylalanine 229 is subject to Phenylalanine amide. Residues 230 to 371 (GREDQGRFGR…EDIAEADQGR (142 aa)) are compositionally biased toward basic and acidic residues. 2 disordered regions span residues 230–374 (GRED…RFGR) and 386–435 (AKKR…AKTS). Residues 231–233 (RED) constitute a propeptide that is removed on maturation. Phenylalanine 237 carries the post-translational modification Phenylalanine amide. The propeptide occupies 239–241 (RED). Phenylalanine 245 carries the phenylalanine amide modification. Residues 247–249 (RED) constitute a propeptide that is removed on maturation. A Phenylalanine amide modification is found at phenylalanine 253. The propeptide occupies 255–257 (RED). Phenylalanine 261 is subject to Phenylalanine amide. A propeptide spanning residues 263 to 265 (RED) is cleaved from the precursor. Phenylalanine 269 is subject to Phenylalanine amide. Residues 271–273 (RED) constitute a propeptide that is removed on maturation. Residue phenylalanine 277 is modified to Phenylalanine amide. Residues 279 to 281 (REL) constitute a propeptide that is removed on maturation. Phenylalanine 285 carries the phenylalanine amide modification. Positions 287–289 (REF) are excised as a propeptide. Phenylalanine 293 bears the Phenylalanine amide mark. Positions 295 to 297 (RED) are excised as a propeptide. Phenylalanine 301 is modified (phenylalanine amide). A propeptide spanning residues 303–305 (RED) is cleaved from the precursor. Phenylalanine 309 carries the phenylalanine amide modification. Positions 311 to 313 (REL) are excised as a propeptide. Phenylalanine 317 carries the phenylalanine amide modification. The propeptide occupies 319–321 (RED). Phenylalanine 325 is subject to Phenylalanine amide. Residues 327–329 (RED) constitute a propeptide that is removed on maturation. At phenylalanine 333 the chain carries Phenylalanine amide. A propeptide spanning residues 335–342 (REDLAKED) is cleaved from the precursor. Phenylalanine 346 is modified (phenylalanine amide). A propeptide spanning residues 348-355 (REDLAKED) is cleaved from the precursor. At phenylalanine 359 the chain carries Phenylalanine amide. Residues 361–368 (REDIAEAD) constitute a propeptide that is removed on maturation. Phenylalanine 372 carries the phenylalanine amide modification. A propeptide spanning residues 374-435 (RNAAAAAAAA…KSDDALAKTS (62 aa)) is cleaved from the precursor. Basic and acidic residues predominate over residues 398-435 (SDPKPQTRFRDGKDMQEKRKVEKKDKIEKSDDALAKTS).

This sequence belongs to the FARP (FMRFamide related peptide) family.

Its subcellular location is the secreted. In terms of biological role, not known but it could act as a transmitter at neuromuscular synapses. The protein is Antho-RFamide neuropeptides type 1 of Anthopleura elegantissima (Green aggregating anemone).